The primary structure comprises 358 residues: 3-dehydroquinate synthase (358 aa).

NAD(+) is bound by residues 70-75, 104-108, 128-129, Lys141, Lys150, and 168-171; these read DGEQYK, GVVGD, TT, and CLNT. Zn(2+) contacts are provided by Glu183, His246, and His263.

It belongs to the sugar phosphate cyclases superfamily. Dehydroquinate synthase family. Requires Co(2+) as cofactor. Zn(2+) serves as cofactor. NAD(+) is required as a cofactor.

The protein localises to the cytoplasm. The catalysed reaction is 7-phospho-2-dehydro-3-deoxy-D-arabino-heptonate = 3-dehydroquinate + phosphate. It functions in the pathway metabolic intermediate biosynthesis; chorismate biosynthesis; chorismate from D-erythrose 4-phosphate and phosphoenolpyruvate: step 2/7. Functionally, catalyzes the conversion of 3-deoxy-D-arabino-heptulosonate 7-phosphate (DAHP) to dehydroquinate (DHQ). The sequence is that of 3-dehydroquinate synthase from Shewanella sediminis (strain HAW-EB3).